The sequence spans 387 residues: Alkanesulfonate monooxygenase (387 aa).

It belongs to the SsuD family.

It carries out the reaction an alkanesulfonate + FMNH2 + O2 = an aldehyde + FMN + sulfite + H2O + 2 H(+). Catalyzes the desulfonation of aliphatic sulfonates. The protein is Alkanesulfonate monooxygenase of Cupriavidus necator (strain ATCC 17699 / DSM 428 / KCTC 22496 / NCIMB 10442 / H16 / Stanier 337) (Ralstonia eutropha).